The sequence spans 261 residues: Carbonic anhydrase 1 (261 aa).

Alanine 2 is subject to N-acetylalanine. The Alpha-carbonic anhydrase domain occupies 4–261; that stretch reads PDWGYDDKNG…LKGRTVRASF (258 aa). Catalysis depends on histidine 65, which acts as the Proton donor/acceptor. Histidine 95, histidine 97, and histidine 120 together coordinate Zn(2+). Substrate contacts are provided by residues threonine 200 and 200-201; that span reads TH. The interval 238–261 is disordered; the sequence is NPVPIQRNNRPTQPLKGRTVRASF.

Belongs to the alpha-carbonic anhydrase family. The cofactor is Zn(2+).

The protein resides in the cytoplasm. It carries out the reaction hydrogencarbonate + H(+) = CO2 + H2O. The catalysed reaction is urea = cyanamide + H2O. Inhibited by acetazolamide. Catalyzes the reversible hydration of carbon dioxide. Can hydrate cyanamide to urea. The chain is Carbonic anhydrase 1 (CA1) from Macaca mulatta (Rhesus macaque).